The chain runs to 183 residues: Ferritin heavy polypeptide-like 17 (183 aa).

Positions 11–160 constitute a Ferritin-like diiron domain; it reads QKYDTNCDAA…GYVSNLRKIC (150 aa). The Fe cation site is built by glutamate 28, histidine 66, glutamate 108, and glutamine 142.

This sequence belongs to the ferritin family. In terms of tissue distribution, testis specific. Also expressed in several cancers.

This chain is Ferritin heavy polypeptide-like 17 (FTHL17), found in Homo sapiens (Human).